A 240-amino-acid chain; its full sequence is 1-(5-phosphoribosyl)-5-[(5-phosphoribosylamino)methylideneamino] imidazole-4-carboxamide isomerase (240 aa).

Asp-8 serves as the catalytic Proton acceptor. Asp-129 serves as the catalytic Proton donor.

The protein belongs to the HisA/HisF family.

Its subcellular location is the cytoplasm. It carries out the reaction 1-(5-phospho-beta-D-ribosyl)-5-[(5-phospho-beta-D-ribosylamino)methylideneamino]imidazole-4-carboxamide = 5-[(5-phospho-1-deoxy-D-ribulos-1-ylimino)methylamino]-1-(5-phospho-beta-D-ribosyl)imidazole-4-carboxamide. It participates in amino-acid biosynthesis; L-histidine biosynthesis; L-histidine from 5-phospho-alpha-D-ribose 1-diphosphate: step 4/9. In Listeria welshimeri serovar 6b (strain ATCC 35897 / DSM 20650 / CCUG 15529 / CIP 8149 / NCTC 11857 / SLCC 5334 / V8), this protein is 1-(5-phosphoribosyl)-5-[(5-phosphoribosylamino)methylideneamino] imidazole-4-carboxamide isomerase.